We begin with the raw amino-acid sequence, 194 residues long: Holliday junction branch migration complex subunit RuvA (194 aa).

The domain I stretch occupies residues 1–61 (MIASLSGLLE…EDSVSLYGFA (61 aa)). A domain II region spans residues 62-136 (SVLECTVFEQ…GKLTSVPLEN (75 aa)). The tract at residues 136–140 (NRKQE) is flexible linker. The tract at residues 141–194 (QAVDRSAEIVQALIGLGWQRQESAAAVESVLEKDQSLTMPEILRNALRYLAKQE) is domain III.

This sequence belongs to the RuvA family. As to quaternary structure, homotetramer. Forms an RuvA(8)-RuvB(12)-Holliday junction (HJ) complex. HJ DNA is sandwiched between 2 RuvA tetramers; dsDNA enters through RuvA and exits via RuvB. An RuvB hexamer assembles on each DNA strand where it exits the tetramer. Each RuvB hexamer is contacted by two RuvA subunits (via domain III) on 2 adjacent RuvB subunits; this complex drives branch migration. In the full resolvosome a probable DNA-RuvA(4)-RuvB(12)-RuvC(2) complex forms which resolves the HJ.

It localises to the cytoplasm. Functionally, the RuvA-RuvB-RuvC complex processes Holliday junction (HJ) DNA during genetic recombination and DNA repair, while the RuvA-RuvB complex plays an important role in the rescue of blocked DNA replication forks via replication fork reversal (RFR). RuvA specifically binds to HJ cruciform DNA, conferring on it an open structure. The RuvB hexamer acts as an ATP-dependent pump, pulling dsDNA into and through the RuvAB complex. HJ branch migration allows RuvC to scan DNA until it finds its consensus sequence, where it cleaves and resolves the cruciform DNA. The chain is Holliday junction branch migration complex subunit RuvA from Tropheryma whipplei (strain Twist) (Whipple's bacillus).